The chain runs to 59 residues: Beta-defensin 134 (59 aa).

A signal peptide spans Met1 to Ala19. 3 disulfide bridges follow: Cys25–Cys51, Cys31–Cys45, and Cys35–Cys52.

It belongs to the beta-defensin family.

It is found in the secreted. In terms of biological role, has antibacterial activity. This Pan troglodytes (Chimpanzee) protein is Beta-defensin 134 (DEFB134).